A 247-amino-acid chain; its full sequence is 14-3-3 protein gamma (247 aa).

This sequence belongs to the 14-3-3 family. In terms of assembly, homodimer, and heterodimer with other family members.

Its subcellular location is the cytoplasm. Functionally, adapter protein implicated in the regulation of a large spectrum of both general and specialized signaling pathways. Binds to a large number of partners, usually by recognition of a phosphoserine or phosphothreonine motif. Binding generally results in the modulation of the activity of the binding partner. This is 14-3-3 protein gamma (YWHAG) from Gallus gallus (Chicken).